A 90-amino-acid chain; its full sequence is ATP synthase subunit c (90 aa).

2 helical membrane-spanning segments follow: residues Pro17 to Val37 and Leu70 to Val90.

Belongs to the ATPase C chain family. F-type ATPases have 2 components, F(1) - the catalytic core - and F(0) - the membrane proton channel. F(1) has five subunits: alpha(3), beta(3), gamma(1), delta(1), epsilon(1). F(0) has three main subunits: a(1), b(2) and c(10-14). The alpha and beta chains form an alternating ring which encloses part of the gamma chain. F(1) is attached to F(0) by a central stalk formed by the gamma and epsilon chains, while a peripheral stalk is formed by the delta and b chains.

It localises to the cell membrane. F(1)F(0) ATP synthase produces ATP from ADP in the presence of a proton or sodium gradient. F-type ATPases consist of two structural domains, F(1) containing the extramembraneous catalytic core and F(0) containing the membrane proton channel, linked together by a central stalk and a peripheral stalk. During catalysis, ATP synthesis in the catalytic domain of F(1) is coupled via a rotary mechanism of the central stalk subunits to proton translocation. Functionally, key component of the F(0) channel; it plays a direct role in translocation across the membrane. A homomeric c-ring of between 10-14 subunits forms the central stalk rotor element with the F(1) delta and epsilon subunits. In Metamycoplasma arthritidis (strain 158L3-1) (Mycoplasma arthritidis), this protein is ATP synthase subunit c.